The primary structure comprises 210 residues: Mediator of RNA polymerase II transcription subunit 20 (210 aa).

Belongs to the Mediator complex subunit 20 family. In terms of assembly, component of the Mediator complex, which is composed of at least 21 subunits that form three structurally distinct submodules. The Mediator head module contains MED6, MED8, MED11, SRB4/MED17, SRB5/MED18, ROX3/MED19, SRB2/MED20 and SRB6/MED22, the middle module contains MED1, MED4, NUT1/MED5, MED7, CSE2/MED9, NUT2/MED10, SRB7/MED21 and SOH1/MED31, and the tail module contains MED2, PGD1/MED3, RGR1/MED14, GAL11/MED15 and SIN4/MED16. The head and the middle modules interact directly with RNA polymerase II, whereas the elongated tail module interacts with gene-specific regulatory proteins. MED1 interacts directly with MED4 and MED7. SRB2/MED20 interacts directly with SRB4/MED17 and SRB5/MED18.

The protein localises to the nucleus. Component of the Mediator complex, a coactivator involved in the regulated transcription of nearly all RNA polymerase II-dependent genes. Mediator functions as a bridge to convey information from gene-specific regulatory proteins to the basal RNA polymerase II transcription machinery. The Mediator complex, having a compact conformation in its free form, is recruited to promoters by direct interactions with regulatory proteins and serves for the assembly of a functional preinitiation complex with RNA polymerase II and the general transcription factors. The Mediator complex unfolds to an extended conformation and partially surrounds RNA polymerase II, specifically interacting with the unphosphorylated form of the C-terminal domain (CTD) of RNA polymerase II. The Mediator complex dissociates from the RNA polymerase II holoenzyme and stays at the promoter when transcriptional elongation begins. In Saccharomyces cerevisiae (strain ATCC 204508 / S288c) (Baker's yeast), this protein is Mediator of RNA polymerase II transcription subunit 20 (SRB2).